A 102-amino-acid chain; its full sequence is Small ribosomal subunit protein uS10 (102 aa).

Belongs to the universal ribosomal protein uS10 family. In terms of assembly, part of the 30S ribosomal subunit.

In terms of biological role, involved in the binding of tRNA to the ribosomes. The polypeptide is Small ribosomal subunit protein uS10 (Thermococcus kodakarensis (strain ATCC BAA-918 / JCM 12380 / KOD1) (Pyrococcus kodakaraensis (strain KOD1))).